The primary structure comprises 427 residues: Enolase (427 aa).

Glutamine 163 serves as a coordination point for (2R)-2-phosphoglycerate. Catalysis depends on glutamate 205, which acts as the Proton donor. Mg(2+) is bound by residues aspartate 242, glutamate 285, and aspartate 312. 4 residues coordinate (2R)-2-phosphoglycerate: lysine 337, arginine 366, serine 367, and lysine 388. Lysine 337 serves as the catalytic Proton acceptor.

The protein belongs to the enolase family. The cofactor is Mg(2+).

The protein localises to the cytoplasm. The protein resides in the secreted. It is found in the cell surface. It carries out the reaction (2R)-2-phosphoglycerate = phosphoenolpyruvate + H2O. Its pathway is carbohydrate degradation; glycolysis; pyruvate from D-glyceraldehyde 3-phosphate: step 4/5. Its function is as follows. Catalyzes the reversible conversion of 2-phosphoglycerate (2-PG) into phosphoenolpyruvate (PEP). It is essential for the degradation of carbohydrates via glycolysis. In Paraburkholderia phymatum (strain DSM 17167 / CIP 108236 / LMG 21445 / STM815) (Burkholderia phymatum), this protein is Enolase.